The following is a 238-amino-acid chain: Probable metal transport system ATP-binding protein TP_0035 (238 aa).

An ABC transporter domain is found at 10–231 (VLLQNVSFRY…LDMQKKDALA (222 aa)). 44-51 (GENGSGKS) lines the ATP pocket.

Belongs to the ABC transporter superfamily.

It localises to the cell inner membrane. Functionally, part of an ATP-driven transport system TP_0034/TP_0035/TP_0036 for a metal. Probably responsible for energy coupling to the transport system. This chain is Probable metal transport system ATP-binding protein TP_0035, found in Treponema pallidum (strain Nichols).